We begin with the raw amino-acid sequence, 344 residues long: [LysW]-L-2-aminoadipate 6-phosphate reductase (344 aa).

Residues 12-15, 36-38, and Leu75 each bind NADP(+); these read SGYA and SRR. Cys148 is a catalytic residue. Residues Ser180, Ala184, and Asn312 each coordinate NADP(+).

This sequence belongs to the NAGSA dehydrogenase family. Type 1 subfamily. LysY sub-subfamily. As to quaternary structure, homotetramer. Interacts with LysW. May form a ternary complex with LysW and LysZ.

It localises to the cytoplasm. It carries out the reaction [amino-group carrier protein]-C-terminal-N-(1-carboxy-5-oxopentan-1-yl)-L-glutamine + phosphate + NADP(+) = [amino-group carrier protein]-C-terminal-N-(1-carboxy-5-phosphooxy-5-oxopentan-1-yl)-L-glutamine + NADPH + H(+). It functions in the pathway amino-acid biosynthesis; L-lysine biosynthesis via AAA pathway; L-lysine from L-alpha-aminoadipate (Thermus route): step 3/5. Functionally, catalyzes the NADPH-dependent reduction of [LysW]-aminoadipate 6-phosphate to yield [LysW]-aminoadipate 6-semialdehyde. The sequence is that of [LysW]-L-2-aminoadipate 6-phosphate reductase from Thermus thermophilus (strain ATCC BAA-163 / DSM 7039 / HB27).